The primary structure comprises 143 residues: Peptide methionine sulfoxide reductase MsrB (143 aa).

The MsrB domain maps to 16-139 (DAELRRRLTP…NSAALNFESR (124 aa)). Positions 55, 58, 104, and 107 each coordinate Zn(2+). Cysteine 128 acts as the Nucleophile in catalysis.

It belongs to the MsrB Met sulfoxide reductase family. The cofactor is Zn(2+).

The catalysed reaction is L-methionyl-[protein] + [thioredoxin]-disulfide + H2O = L-methionyl-(R)-S-oxide-[protein] + [thioredoxin]-dithiol. This chain is Peptide methionine sulfoxide reductase MsrB, found in Burkholderia cenocepacia (strain ATCC BAA-245 / DSM 16553 / LMG 16656 / NCTC 13227 / J2315 / CF5610) (Burkholderia cepacia (strain J2315)).